The chain runs to 387 residues: MSVIKMTDLELAGKRVFIRADLNVPVKDGKVTSDARILASLPTIKLCLEAGAKVMVTSHLGRPTEGEYNEEFSLAPVVNYLNDALDCDVKLAKDYLDGLELNAGELVVLENVRFNKGEKKNEEELSKKYAALCDIFVMDAFGTAHRAQASTHGVGMNAPVACAGPLLAAELEALGKAMDNPERPLVAIVGGSKVSTKLTVLESLSKIADQLVVGGGIANTFIAAEGHNVGKSLYEADLVETAQKLMKECAIPVATDVACAKAFDENAEAEIKHVSEVQDDDMIFDLGPDSTAALAEIIGNAKTILWNGPVGVFEFKNFEAGTAGISKAIAESAGFSVAGGGDTLAAIDKFGIKADVSYISTGGGAFLEFVEGKVLPAVAMLEERAKA.

Substrate-binding positions include 21–23 (DLN), R36, 59–62 (HLGR), R113, and R146. ATP contacts are provided by residues K197, E314, and 340–343 (GGDT).

It belongs to the phosphoglycerate kinase family. Monomer.

The protein resides in the cytoplasm. The enzyme catalyses (2R)-3-phosphoglycerate + ATP = (2R)-3-phospho-glyceroyl phosphate + ADP. It functions in the pathway carbohydrate degradation; glycolysis; pyruvate from D-glyceraldehyde 3-phosphate: step 2/5. The chain is Phosphoglycerate kinase from Aliivibrio fischeri (strain MJ11) (Vibrio fischeri).